A 288-amino-acid chain; its full sequence is Protein PGR (288 aa).

Helical transmembrane passes span 1-21, 29-49, 91-111, 123-143, 177-197, 210-230, and 268-288; these read METS…LIAF, LDLS…TAGF, VLCN…LTGW, IVTA…GDTW, LLAA…FGLF, LLVI…DSIL, and VNFV…VYIF.

This sequence belongs to the TMEM19 family. Expressed in the vasculature of leaves, roots, inflorescences, siliques, anther filaments and sepals. Detected primarily in the phloem tissues, including in the root ans shoot apical meristems.

It localises to the cell membrane. Functionally, involved in the glucose-triggered developmental leaf growth process. The sequence is that of Protein PGR from Arabidopsis thaliana (Mouse-ear cress).